The chain runs to 574 residues: Sulfate adenylyltransferase (574 aa).

The interval 1–169 is N-terminal; the sequence is MANSPHGGVL…IEAVNKLNHY (169 aa). Residues 170-394 are catalytic; it reads DYVALRYSPA…LRESSPPRAT (225 aa). Residue glutamine 197 participates in sulfate binding. Residues 197-200 and 291-294 contribute to the ATP site; these read QTRN and GRDH. Residues threonine 198, arginine 199, and asparagine 200 contribute to the active site. Arginine 199 lines the sulfate pocket. Residue alanine 295 coordinates sulfate. Valine 333 is a binding site for ATP. The interval 395–574 is allosteric regulation domain; adenylyl-sulfate kinase-like; sequence QGFTIFLTGY…LESEGYFDRL (180 aa). 3'-phosphoadenylyl sulfate contacts are provided by residues 434 to 437, arginine 451, 477 to 478, and arginine 516; these read DTVR and IA.

The protein in the N-terminal section; belongs to the sulfate adenylyltransferase family. This sequence in the C-terminal section; belongs to the APS kinase family. In terms of assembly, homohexamer. Dimer of trimers.

It localises to the cytoplasm. It carries out the reaction sulfate + ATP + H(+) = adenosine 5'-phosphosulfate + diphosphate. Its pathway is sulfur metabolism; hydrogen sulfide biosynthesis; sulfite from sulfate: step 1/3. Its activity is regulated as follows. Allosterically inhibited by 3'-phosphoadenosine 5'-phosphosulfate (PAPS). Functionally, catalyzes the first intracellular reaction of sulfate assimilation, forming adenosine-5'-phosphosulfate (APS) from inorganic sulfate and ATP. Plays an important role in sulfate activation as a component of the biosynthesis pathway of sulfur-containing amino acids. The chain is Sulfate adenylyltransferase from Aspergillus terreus (strain NIH 2624 / FGSC A1156).